The primary structure comprises 423 residues: Inactive autotransporter heptosyltransferase BimC (423 aa).

Over residues 1–10 the composition is skewed to polar residues; sequence MPKVTFSGSA. The interval 1–49 is disordered; that stretch reads MPKVTFSGSAPTLGVHAPPALDPRQPASPPPAASNGTHARGFSPPADMP. Residues C371, C374, C390, and C402 each coordinate Fe(3+).

It belongs to the glycosyltransferase 9 family. As to quaternary structure, homotrimer or homotetramer. The cofactor is Fe(3+).

The protein resides in the cell inner membrane. It is found in the cytoplasm. Functionally, iron-binding protein which is required for the asymmetric polar distribution of the autotransporter BimA on the bacterial surface prior to its translocation into bacterial periplasm. Lacks heptosyltransferase activity. The polypeptide is Inactive autotransporter heptosyltransferase BimC (Burkholderia thailandensis (strain ATCC 700388 / DSM 13276 / CCUG 48851 / CIP 106301 / E264)).